The chain runs to 288 residues: RanBP2-type zinc finger protein At1g67325 (288 aa).

The span at 1 to 11 (MSQVDNRNSSA) shows a compositional bias: polar residues. Disordered regions lie at residues 1–24 (MSQV…RRED), 52–77 (PADH…GAYL), 176–198 (MPRP…DNDW), 222–248 (PKPG…WKCD), and 265–288 (NCGA…ENDQ). Residues 15–24 (ARTDGGRRED) show a composition bias toward basic and acidic residues. RanBP2-type zinc fingers lie at residues 22 to 53 (REDD…PRPA), 194 to 225 (RDND…PKPG), and 241 to 272 (PEGS…DKPG). Over residues 181 to 197 (FYPDEKSQKRDSTRDND) the composition is skewed to basic and acidic residues. Polar residues predominate over residues 223–241 (KPGSQQGGSSDKISKQNAP). A Phosphoserine modification is found at S278.

This Arabidopsis thaliana (Mouse-ear cress) protein is RanBP2-type zinc finger protein At1g67325.